An 868-amino-acid polypeptide reads, in one-letter code: Dolichyl-phosphooligosaccharide-protein glycotransferase 3 (868 aa).

Topologically, residues 1-16 (MQNAESWFKKYWHLSV) are cytoplasmic. The chain crosses the membrane as a helical span at residues 17-36 (LVIAALISVKLRILNPWNSV). Over 37–101 (FTWTVRLGGN…IAGIIFSATS (65 aa)) the chain is Extracellular. Residues 45-47 (GND) carry the DXD motif 1 motif. Aspartate 47 serves as a coordination point for Mn(2+). Histidine 81 lines the a glycophospholipid pocket. Residues 102 to 131 (GESLRAVLAFIPAIGGVLAILPVYLLTREV) traverse the membrane as a helical segment. At 132–133 (FD) the chain is on the cytoplasmic side. A helical membrane pass occupies residues 134 to 153 (KRAAVIAAFLIAIVPGQFLQ). At 154–162 (RSILGFNDH) the chain is on the extracellular side. Aspartate 161 is a Mn(2+) binding site. The DXD motif 2 motif lies at 161–163 (DHH). Position 162 (histidine 162) interacts with a glycophospholipid. Histidine 163 provides a ligand contact to Mn(2+). Residues 163–184 (HIWEAFWQVSALGTFLLAYNRW) form a helical membrane-spanning segment. Topologically, residues 185–199 (KGHDLSHNLTARQMA) are cytoplasmic. A helical transmembrane segment spans residues 200-212 (YPVIAGITIGLYV). Topologically, residues 213–215 (LSW) are extracellular. Residues 216 to 238 (GAGFIIAPIILAFMFFAFVLAGF) traverse the membrane as a helical segment. Residues 239–241 (VNA) are Cytoplasmic-facing. Residues 242-262 (DRKNLSLVAVVTFAVSALIYL) form a helical membrane-spanning segment. Topologically, residues 263–279 (PFAFNYPGFSTIFYSPF) are extracellular. Residues 280–303 (QLLVLLGSAVIAAAFYQIEKWNDV) traverse the membrane as a helical segment. Over 304 to 312 (GFFERVGLG) the chain is Cytoplasmic. Residues 313-330 (RKGMPLAVIVLTALIMGL) traverse the membrane as a helical segment. The Extracellular portion of the chain corresponds to 331 to 373 (FFVISPDFARNLLSVVRVVQPKGGALTIAEVYPFFFTHNGEFT). The TIXE motif signature appears at 357–360 (TIAE). A helical transmembrane segment spans residues 374–396 (LTNAVLHFGALFFFGMAGILYSA). Topologically, residues 397–404 (YRFLKRRS) are cytoplasmic. The chain crosses the membrane as a helical span at residues 405-423 (FPEMALLIWAIAMFIALWG). The Extracellular portion of the chain corresponds to 424–427 (QNRF). Position 426 (arginine 426) interacts with a glycophospholipid. Residues 428 to 452 (AYYFAAVSAVYSALALSVVFDKLHL) traverse the membrane as a helical segment. The Cytoplasmic segment spans residues 453-468 (YRALENAIGARNKLSY). The helical transmembrane segment at 469–494 (FRVAFALLIALAAIYPTYILADAQSS) threads the bilayer. Topologically, residues 495 to 868 (YAGGPNKQWY…QNGEIIQLDL (374 aa)) are extracellular. Residues 550–552 (WWD) form an interacts with target acceptor peptide in protein substrate region. Residues 550–554 (WWDYG) carry the WWDYG motif motif. The short motif at 613-622 (EMETGKYYAM) is the DKi motif element.

This sequence belongs to the STT3 family. Requires Mg(2+) as cofactor. The cofactor is Mn(2+). Zn(2+) is required as a cofactor.

The protein resides in the cell membrane. The catalysed reaction is an archaeal dolichyl phosphooligosaccharide + [protein]-L-asparagine = an archaeal dolichyl phosphate + a glycoprotein with the oligosaccharide chain attached by N-beta-D-glycosyl linkage to a protein L-asparagine.. It functions in the pathway protein modification; protein glycosylation. Functionally, oligosaccharyl transferase (OST) that catalyzes the initial transfer of a defined glycan (a glucose-linked heptasaccharide composed of 3 Glc, 2 Man, 2 Gal and a sulfate for A.fulgidus AglB-L) from the lipid carrier dolichol-monophosphate to an asparagine residue within an Asn-X-Ser/Thr consensus motif in nascent polypeptide chains, the first step in protein N-glycosylation. The chain is Dolichyl-phosphooligosaccharide-protein glycotransferase 3 (aglB3) from Archaeoglobus fulgidus (strain ATCC 49558 / DSM 4304 / JCM 9628 / NBRC 100126 / VC-16).